The chain runs to 199 residues: Probable DNA-directed RNA polymerase subunit delta (199 aa).

In terms of domain architecture, HTH HARE-type spans 14–81 (LSLIEVAHAI…GDNMWGLRAW (68 aa)). 3 stretches are compositionally biased toward acidic residues: residues 116 to 147 (GDDD…DTDD), 157 to 171 (AGVD…DETL), and 182 to 199 (LNDD…DESK). The tract at residues 116-199 (GDDDDVIDYD…DYDDEDDESK (84 aa)) is disordered.

Belongs to the RpoE family. In terms of assembly, RNAP is composed of a core of 2 alpha, a beta and a beta' subunits. The core is associated with a delta subunit and one of several sigma factors.

In terms of biological role, participates in both the initiation and recycling phases of transcription. In the presence of the delta subunit, RNAP displays an increased specificity of transcription, a decreased affinity for nucleic acids, and an increased efficiency of RNA synthesis because of enhanced recycling. The sequence is that of Probable DNA-directed RNA polymerase subunit delta from Lactiplantibacillus plantarum (strain ATCC BAA-793 / NCIMB 8826 / WCFS1) (Lactobacillus plantarum).